Consider the following 306-residue polypeptide: Ornithine carbamoyltransferase (306 aa).

Carbamoyl phosphate contacts are provided by residues 50–53 (STRT), Gln77, Arg101, and 128–131 (HPCQ). L-ornithine contacts are provided by residues Asn160, Asp224, and 228 to 229 (SM). Residues 261 to 262 (CL) and Arg289 each bind carbamoyl phosphate.

Belongs to the aspartate/ornithine carbamoyltransferase superfamily. OTCase family.

Its subcellular location is the cytoplasm. The catalysed reaction is carbamoyl phosphate + L-ornithine = L-citrulline + phosphate + H(+). Its pathway is amino-acid biosynthesis; L-arginine biosynthesis; L-arginine from L-ornithine and carbamoyl phosphate: step 1/3. Its function is as follows. Reversibly catalyzes the transfer of the carbamoyl group from carbamoyl phosphate (CP) to the N(epsilon) atom of ornithine (ORN) to produce L-citrulline. This Aquifex aeolicus (strain VF5) protein is Ornithine carbamoyltransferase.